The following is a 405-amino-acid chain: Argininosuccinate synthase (405 aa).

Residues 11 to 19 (AYSGGLDTS) and Ala38 contribute to the ATP site. Residues Tyr91 and Ser96 each coordinate L-citrulline. An ATP-binding site is contributed by Gly121. L-aspartate contacts are provided by Thr123, Asn127, and Asp128. Asn127 serves as a coordination point for L-citrulline. The L-citrulline site is built by Arg131, Ser181, Ser190, Glu266, and Tyr278.

The protein belongs to the argininosuccinate synthase family. Type 1 subfamily. Homotetramer.

The protein localises to the cytoplasm. The enzyme catalyses L-citrulline + L-aspartate + ATP = 2-(N(omega)-L-arginino)succinate + AMP + diphosphate + H(+). It participates in amino-acid biosynthesis; L-arginine biosynthesis; L-arginine from L-ornithine and carbamoyl phosphate: step 2/3. This is Argininosuccinate synthase from Nitratiruptor sp. (strain SB155-2).